Consider the following 140-residue polypeptide: Nucleoside diphosphate kinase (140 aa).

6 residues coordinate ATP: lysine 9, phenylalanine 57, arginine 85, threonine 91, arginine 102, and asparagine 112. Catalysis depends on histidine 115, which acts as the Pros-phosphohistidine intermediate.

This sequence belongs to the NDK family. In terms of assembly, homotetramer. Mg(2+) serves as cofactor.

It localises to the cytoplasm. It carries out the reaction a 2'-deoxyribonucleoside 5'-diphosphate + ATP = a 2'-deoxyribonucleoside 5'-triphosphate + ADP. The enzyme catalyses a ribonucleoside 5'-diphosphate + ATP = a ribonucleoside 5'-triphosphate + ADP. Its function is as follows. Major role in the synthesis of nucleoside triphosphates other than ATP. The ATP gamma phosphate is transferred to the NDP beta phosphate via a ping-pong mechanism, using a phosphorylated active-site intermediate. The chain is Nucleoside diphosphate kinase from Chlorobium chlorochromatii (strain CaD3).